Here is a 331-residue protein sequence, read N- to C-terminus: UPF0324 membrane protein SAS0317 (331 aa).

A run of 11 helical transmembrane segments spans residues 9-26, 31-48, 69-88, 93-115, 122-144, 154-176, 183-202, 217-234, 247-269, 273-295, and 308-330; these read FMIG…SFLA, ILDK…AILY, LLRF…DIIG, LLAI…NKLL, ALLL…APIF, SIGI…YAIF, YGAW…LAGG, LGRV…ILIM, ISIP…VTIP, LNIL…GLNV, and LMTI…HWLY.

It belongs to the UPF0324 family.

The protein resides in the cell membrane. The polypeptide is UPF0324 membrane protein SAS0317 (Staphylococcus aureus (strain MSSA476)).